Here is a 241-residue protein sequence, read N- to C-terminus: Acetoacetyl-CoA reductase (241 aa).

NADP(+) is bound by residues 12 to 14 (RGI), R39, and 82 to 86 (NAGIT). Substrate is bound by residues D88 and 141 to 144 (QMGQ). Y147 acts as the Proton acceptor in catalysis. 177–180 (PGYI) serves as a coordination point for NADP(+). Residue 178 to 179 (GY) participates in substrate binding.

Belongs to the short-chain dehydrogenases/reductases (SDR) family.

The protein resides in the cytoplasm. It carries out the reaction a (3R)-3-hydroxyacyl-CoA + NADP(+) = a 3-oxoacyl-CoA + NADPH + H(+). It functions in the pathway biopolymer metabolism; poly-(R)-3-hydroxybutanoate biosynthesis. This Rhizobium meliloti (strain 1021) (Ensifer meliloti) protein is Acetoacetyl-CoA reductase.